We begin with the raw amino-acid sequence, 237 residues long: Phosphoribosylaminoimidazole-succinocarboxamide synthase (237 aa).

Belongs to the SAICAR synthetase family.

The enzyme catalyses 5-amino-1-(5-phospho-D-ribosyl)imidazole-4-carboxylate + L-aspartate + ATP = (2S)-2-[5-amino-1-(5-phospho-beta-D-ribosyl)imidazole-4-carboxamido]succinate + ADP + phosphate + 2 H(+). It participates in purine metabolism; IMP biosynthesis via de novo pathway; 5-amino-1-(5-phospho-D-ribosyl)imidazole-4-carboxamide from 5-amino-1-(5-phospho-D-ribosyl)imidazole-4-carboxylate: step 1/2. The protein is Phosphoribosylaminoimidazole-succinocarboxamide synthase of Salmonella agona (strain SL483).